We begin with the raw amino-acid sequence, 127 residues long: Holo-[acyl-carrier-protein] synthase (127 aa).

2 residues coordinate Mg(2+): D8 and E56.

It belongs to the P-Pant transferase superfamily. AcpS family. Mg(2+) is required as a cofactor.

The protein resides in the cytoplasm. The enzyme catalyses apo-[ACP] + CoA = holo-[ACP] + adenosine 3',5'-bisphosphate + H(+). Transfers the 4'-phosphopantetheine moiety from coenzyme A to a Ser of acyl-carrier-protein. This chain is Holo-[acyl-carrier-protein] synthase, found in Cytophaga hutchinsonii (strain ATCC 33406 / DSM 1761 / CIP 103989 / NBRC 15051 / NCIMB 9469 / D465).